The chain runs to 652 residues: Putative asparagine synthetase [glutamine-hydrolyzing] (652 aa).

Cys2 acts as the For GATase activity in catalysis. The region spanning 2 to 231 (CGLLAFVAAP…SGCFARIRAD (230 aa)) is the Glutamine amidotransferase type-2 domain. Residues 60–64 (RLSII), 89–91 (NGE), and Asp115 each bind L-glutamine. An ATP-binding site is contributed by 382–383 (SG).

The protein belongs to the asparagine synthetase family.

It carries out the reaction L-aspartate + L-glutamine + ATP + H2O = L-asparagine + L-glutamate + AMP + diphosphate + H(+). Its pathway is amino-acid biosynthesis; L-asparagine biosynthesis; L-asparagine from L-aspartate (L-Gln route): step 1/1. In Mycobacterium bovis (strain ATCC BAA-935 / AF2122/97), this protein is Putative asparagine synthetase [glutamine-hydrolyzing] (asnB).